Here is a 536-residue protein sequence, read N- to C-terminus: Probable 1,4-beta-D-glucan cellobiohydrolase B (536 aa).

The first 21 residues, 1–21 (MSSFQVYRAALLLSILATANA), serve as a signal peptide directing secretion. Positions 22–458 (QQVGTYTTET…SNIKFGPIGS (437 aa)) are catalytic. Glu233 acts as the Nucleophile in catalysis. Glu238 functions as the Proton donor in the catalytic mechanism. N-linked (GlcNAc...) asparagine glycans are attached at residues Asn351 and Asn414. The interval 459-500 (TYSSGSSSGSGSSSSSSSTTTKATSTTLKTTSTTSSGSSSTS) is ser/Thr-rich linker. The interval 464-499 (SSSGSGSSSSSSSTTTKATSTTLKTTSTTSSGSSST) is disordered. A CBM1 domain is found at 500-536 (SAAQAYGQCGGQGWTGPTTCVSGYTCTYENAYYSQCL). Intrachain disulfides connect Cys508/Cys525 and Cys519/Cys535.

This sequence belongs to the glycosyl hydrolase 7 (cellulase C) family.

The protein resides in the secreted. The enzyme catalyses Hydrolysis of (1-&gt;4)-beta-D-glucosidic linkages in cellulose and cellotetraose, releasing cellobiose from the non-reducing ends of the chains.. In terms of biological role, the biological conversion of cellulose to glucose generally requires three types of hydrolytic enzymes: (1) Endoglucanases which cut internal beta-1,4-glucosidic bonds; (2) Exocellobiohydrolases that cut the disaccharide cellobiose from the non-reducing end of the cellulose polymer chain; (3) Beta-1,4-glucosidases which hydrolyze the cellobiose and other short cello-oligosaccharides to glucose. The protein is Probable 1,4-beta-D-glucan cellobiohydrolase B (cbhB) of Aspergillus niger (strain ATCC MYA-4892 / CBS 513.88 / FGSC A1513).